Here is a 275-residue protein sequence, read N- to C-terminus: NAD kinase (275 aa).

D68 functions as the Proton acceptor in the catalytic mechanism. Residues 68-69, R73, 136-137, K147, R164, D166, 177-182, A201, and Q236 contribute to the NAD(+) site; these read DG, NE, and TAYAMS.

This sequence belongs to the NAD kinase family. The cofactor is a divalent metal cation.

It localises to the cytoplasm. The enzyme catalyses NAD(+) + ATP = ADP + NADP(+) + H(+). Functionally, involved in the regulation of the intracellular balance of NAD and NADP, and is a key enzyme in the biosynthesis of NADP. Catalyzes specifically the phosphorylation on 2'-hydroxyl of the adenosine moiety of NAD to yield NADP. The polypeptide is NAD kinase (Methanosarcina barkeri (strain Fusaro / DSM 804)).